Reading from the N-terminus, the 457-residue chain is UPF0328 protein ECU05_0030 (457 aa).

2 disordered regions span residues 1–112 (MPRP…PTAT) and 157–183 (VKSQ…NPRI). Over residues 74 to 94 (HTEGCHTHEANPEPNTKHTET) the composition is skewed to basic and acidic residues. Positions 102 to 112 (CPPPHPGPTAT) are enriched in pro residues.

This sequence belongs to the UPF0328 family.

The protein is UPF0328 protein ECU05_0030 of Encephalitozoon cuniculi (strain GB-M1) (Microsporidian parasite).